A 143-amino-acid polypeptide reads, in one-letter code: uncharacterized protein (143 aa).

A disordered region spans residues 1 to 37 (MSAPASSSAIAPSQPTAPGHARHSASWSASASDPSGA).

The protein belongs to the dynein light chain Tctex-type family.

This is an uncharacterized protein from Mycosarcoma maydis (Corn smut fungus).